Here is a 275-residue protein sequence, read N- to C-terminus: Protein FAM210A (275 aa).

The interval 68–108 (SSQPADTPRKVPEEREPLTSATEVPKQSPVESDASDPDPLQ) is disordered. Over residues 74 to 84 (TPRKVPEEREP) the composition is skewed to basic and acidic residues. A DUF1279 domain is found at 109–221 (DKSISLVQRF…GYMSTPPPVK (113 aa)). The chain crosses the membrane as a helical span at residues 128-148 (VMIPVHLVTSTVWFGSFYYAA). A coiled-coil region spans residues 221 to 271 (KEYLQDRMEETKDKITEKMEETKDKITEKMEETKDKITEKIQETKDKVSFK).

It belongs to the FAM210 family. Interacts with ATAD3A.

Its subcellular location is the membrane. It is found in the mitochondrion. The protein resides in the cytoplasm. Its function is as follows. May play a role in the structure and strength of both muscle and bone. The protein is Protein FAM210A (FAM210A) of Gallus gallus (Chicken).